The following is a 452-amino-acid chain: Maltoporin (452 aa).

The first 25 residues, 1–25 (MMITLRKLPLAVAVAAGVMSAQAMA), serve as a signal peptide directing secretion.

It belongs to the porin LamB (TC 1.B.3) family. In terms of assembly, homotrimer formed of three 18-stranded antiparallel beta-barrels, containing three independent channels.

The protein resides in the cell outer membrane. It carries out the reaction beta-maltose(in) = beta-maltose(out). Its function is as follows. Involved in the transport of maltose and maltodextrins. This Salmonella newport (strain SL254) protein is Maltoporin.